A 584-amino-acid polypeptide reads, in one-letter code: Phosphoinositide phospholipase C 7 (584 aa).

In terms of domain architecture, EF-hand-like spans 26 to 102 (EIKTLFDNYS…NSPLSSLEVH (77 aa)). Residues 103–248 (QDMDAPLSHY…LKKRIMISTK (146 aa)) form the PI-PLC X-box domain. Catalysis depends on residues His-118 and His-164. A disordered region spans residues 285–318 (DRSVDKNDSNGDDDDDDDDDDDDDDGDDKIKKNA). The residue at position 287 (Ser-287) is a Phosphoserine. Over residues 294–311 (NGDDDDDDDDDDDDDDGD) the composition is skewed to acidic residues. One can recognise a PI-PLC Y-box domain in the interval 323–439 (KHLIAIEAGK…GYIKKPDLLL (117 aa)). Positions 433–566 (KKPDLLLKSN…QGIRAVPLRN (134 aa)) constitute a C2 domain.

Ca(2+) serves as cofactor. In terms of tissue distribution, expressed in leaves, roots, flowers and siliques.

It is found in the cell membrane. It carries out the reaction a 1,2-diacyl-sn-glycero-3-phospho-(1D-myo-inositol-4,5-bisphosphate) + H2O = 1D-myo-inositol 1,4,5-trisphosphate + a 1,2-diacyl-sn-glycerol + H(+). Its function is as follows. The production of the second messenger molecules diacylglycerol (DAG) and inositol 1,4,5-trisphosphate (IP3) is mediated by activated phosphatidylinositol-specific phospholipase C enzymes. This is Phosphoinositide phospholipase C 7 (PLC7) from Arabidopsis thaliana (Mouse-ear cress).